A 249-amino-acid polypeptide reads, in one-letter code: L-fucose operon activator (249 aa).

Residues 1–56 (MNYRDELILQWVNQQGKASVIELAQHCDISVETIRRDLNKLANKGLLHRTHGGAVS) enclose the HTH deoR-type domain. The H-T-H motif DNA-binding region spans 18–37 (ASVIELAQHCDISVETIRRD).

In terms of biological role, transcriptional activator of the fuc operon. The chain is L-fucose operon activator (fucR) from Haemophilus influenzae (strain ATCC 51907 / DSM 11121 / KW20 / Rd).